The chain runs to 341 residues: Holliday junction branch migration complex subunit RuvB (341 aa).

The tract at residues 1-21 is disordered; the sequence is MSQPDPMLRPEPLESDGEDRA. Positions 4 to 183 are large ATPase domain (RuvB-L); it reads PDPMLRPEPL…FGIPTRLQFY (180 aa). ATP contacts are provided by residues leucine 22, arginine 23, glycine 64, lysine 67, threonine 68, threonine 69, 130-132, arginine 173, tyrosine 183, and arginine 220; that span reads EDF. Threonine 68 contacts Mg(2+). Positions 184–254 are small ATPAse domain (RuvB-S); sequence TIEELDLIVT…IADSALTRLG (71 aa). A head domain (RuvB-H) region spans residues 257–341; it reads HLGLDTADRR…PRTQESLFDE (85 aa). DNA is bound by residues arginine 293, arginine 312, and arginine 317.

It belongs to the RuvB family. Homohexamer. Forms an RuvA(8)-RuvB(12)-Holliday junction (HJ) complex. HJ DNA is sandwiched between 2 RuvA tetramers; dsDNA enters through RuvA and exits via RuvB. An RuvB hexamer assembles on each DNA strand where it exits the tetramer. Each RuvB hexamer is contacted by two RuvA subunits (via domain III) on 2 adjacent RuvB subunits; this complex drives branch migration. In the full resolvosome a probable DNA-RuvA(4)-RuvB(12)-RuvC(2) complex forms which resolves the HJ.

The protein localises to the cytoplasm. It carries out the reaction ATP + H2O = ADP + phosphate + H(+). Its function is as follows. The RuvA-RuvB-RuvC complex processes Holliday junction (HJ) DNA during genetic recombination and DNA repair, while the RuvA-RuvB complex plays an important role in the rescue of blocked DNA replication forks via replication fork reversal (RFR). RuvA specifically binds to HJ cruciform DNA, conferring on it an open structure. The RuvB hexamer acts as an ATP-dependent pump, pulling dsDNA into and through the RuvAB complex. RuvB forms 2 homohexamers on either side of HJ DNA bound by 1 or 2 RuvA tetramers; 4 subunits per hexamer contact DNA at a time. Coordinated motions by a converter formed by DNA-disengaged RuvB subunits stimulates ATP hydrolysis and nucleotide exchange. Immobilization of the converter enables RuvB to convert the ATP-contained energy into a lever motion, pulling 2 nucleotides of DNA out of the RuvA tetramer per ATP hydrolyzed, thus driving DNA branch migration. The RuvB motors rotate together with the DNA substrate, which together with the progressing nucleotide cycle form the mechanistic basis for DNA recombination by continuous HJ branch migration. Branch migration allows RuvC to scan DNA until it finds its consensus sequence, where it cleaves and resolves cruciform DNA. This Paracoccus denitrificans (strain Pd 1222) protein is Holliday junction branch migration complex subunit RuvB.